Here is a 103-residue protein sequence, read N- to C-terminus: Probable protease inhibitor Egf0.4b (103 aa).

The signal sequence occupies residues 1-22 (MMSEKFALVLLVACIAFIGIET). Residues 35-87 (CGENEAYDSMRRGCEERCDDHNPTFCFKFTTVCWCEKGYVRDKSDTCIKVEDC) form the TIL domain.

This sequence belongs to the polydnaviridae EGF-like motif protein family.

The polypeptide is Probable protease inhibitor Egf0.4b (O11) (Microplitis demolitor bracovirus (isolate Webb) (MdBV)).